The sequence spans 260 residues: Proline-rich protein 33 (260 aa).

Residues 29 to 132 (GVQTVSPRPE…KVAPKPSRSG (104 aa)) are disordered. Over residues 73 to 83 (GPSPYSPPPAA) the composition is skewed to pro residues.

The polypeptide is Proline-rich protein 33 (Prr33) (Mus musculus (Mouse)).